The following is a 158-amino-acid chain: MAQTFTDTERAILRIVQKNLPDSATPYADIAEQTGTDEQTVLALLRRMKEEGSIRRFGASLKHQKAGYTHNAMVAWIVDKDTVDEVGRQAAEHRLISHVYYRPSTAPDWPYTLYTMIHGRHENEYLEVIDTLRKETALEEYAVLNSLKELKKTSMTYF.

Belongs to the Ahb/Nir family. In terms of assembly, forms a heterodimer composed of AhbA and AhbB.

It carries out the reaction siroheme + 2 H(+) = 12,18-didecarboxysiroheme + 2 CO2. Its pathway is porphyrin-containing compound metabolism; protoheme biosynthesis. In terms of biological role, involved in siroheme-dependent heme b biosynthesis. Catalyzes the decarboxylation of siroheme into didecarboxysiroheme. This Oleidesulfovibrio alaskensis (strain ATCC BAA-1058 / DSM 17464 / G20) (Desulfovibrio alaskensis) protein is Siroheme decarboxylase beta subunit.